Consider the following 334-residue polypeptide: Catabolite repressor/activator (334 aa).

The HTH lacI-type domain maps to 1–58; sequence MKLDEIARLAGVSRTTASYVINGKAKQYRVSDKTVEKVMAVVREHNYHPNAVAAGLRA. Residues 3-22 constitute a DNA-binding region (H-T-H motif); that stretch reads LDEIARLAGVSRTTASYVIN.

In terms of assembly, homotetramer.

Its function is as follows. Global transcriptional regulator, which plays an important role in the regulation of carbon metabolism. This is Catabolite repressor/activator (cra) from Escherichia coli O157:H7.